Reading from the N-terminus, the 70-residue chain is Putative membrane protein insertion efficiency factor (70 aa).

It belongs to the UPF0161 family.

The protein resides in the cell membrane. In terms of biological role, could be involved in insertion of integral membrane proteins into the membrane. This chain is Putative membrane protein insertion efficiency factor, found in Lachnoclostridium phytofermentans (strain ATCC 700394 / DSM 18823 / ISDg) (Clostridium phytofermentans).